The chain runs to 307 residues: UDP-3-O-acyl-N-acetylglucosamine deacetylase (307 aa).

Zn(2+)-binding residues include His-78, His-237, and Asp-241. Catalysis depends on His-264, which acts as the Proton donor.

The protein belongs to the LpxC family. The cofactor is Zn(2+).

The catalysed reaction is a UDP-3-O-[(3R)-3-hydroxyacyl]-N-acetyl-alpha-D-glucosamine + H2O = a UDP-3-O-[(3R)-3-hydroxyacyl]-alpha-D-glucosamine + acetate. It functions in the pathway glycolipid biosynthesis; lipid IV(A) biosynthesis; lipid IV(A) from (3R)-3-hydroxytetradecanoyl-[acyl-carrier-protein] and UDP-N-acetyl-alpha-D-glucosamine: step 2/6. Its function is as follows. Catalyzes the hydrolysis of UDP-3-O-myristoyl-N-acetylglucosamine to form UDP-3-O-myristoylglucosamine and acetate, the committed step in lipid A biosynthesis. The chain is UDP-3-O-acyl-N-acetylglucosamine deacetylase from Azoarcus sp. (strain BH72).